The chain runs to 58 residues: Large ribosomal subunit protein uL30 (58 aa).

This sequence belongs to the universal ribosomal protein uL30 family. In terms of assembly, part of the 50S ribosomal subunit.

In Trichlorobacter lovleyi (strain ATCC BAA-1151 / DSM 17278 / SZ) (Geobacter lovleyi), this protein is Large ribosomal subunit protein uL30.